Here is a 3916-residue protein sequence, read N- to C-terminus: Fusarin C synthetase (3916 aa).

A Ketosynthase family 3 (KS3) domain is found at 9–440; that stretch reads KEPIAIIGTS…GTNVHAIIEQ (432 aa). Active-site for beta-ketoacyl synthase activity residues include cysteine 182, histidine 319, and histidine 360. The tract at residues 548–866 is malonyl-CoA:ACP transacylase (MAT) domain; the sequence is VFTGQGAQWP…QGTVARNIHD (319 aa). The segment at 935–1068 is N-terminal hotdog fold; the sequence is HPLLGARSVE…GQLRVEFGCS (134 aa). Residues 935 to 1228 are dehydratase (DH) domain; it reads HPLLGARSVE…GLTCTSLLRP (294 aa). One can recognise a PKS/mFAS DH domain in the interval 935-1231; sequence HPLLGARSVE…CTSLLRPGPS (297 aa). The active-site Proton acceptor; for dehydratase activity is the histidine 967. Positions 1084–1231 are C-terminal hotdog fold; the sequence is LTSVNMERFY…CTSLLRPGPS (148 aa). The active-site Proton donor; for dehydratase activity is the aspartate 1141. Residues 1347–1575 form a C-methyltransferase (CMeT) domain region; sequence IQAVGENLPS…VNDFVDAEKY (229 aa). Residues 2092–2266 form a ketoreductase (KR) domain 1 region; that stretch reads TYLLIGCTGG…AASVMHIGMV (175 aa). A Carrier 1 domain is found at 2372–2449; sequence EILAVVEEEF…ELCSTVVSHL (78 aa). Serine 2409 carries the O-(pantetheine 4'-phosphoryl)serine modification. The segment at 2487–2510 is disordered; that stretch reads NEPFTIRNSPNSTQVTSEAGVDED. The span at 2492–2503 shows a compositional bias: polar residues; it reads IRNSPNSTQVTS. The segment at 2522–2806 is condensation; it reads PLSFAQERLW…VNLLPLRLKI (285 aa). Residues 2975–3385 are adenylation; it reads EFVVKQPDDT…RIAGDSQIKL (411 aa). Residues 3493 to 3570 form the Carrier 2 domain; that stretch reads KPLTETQERL…EMAAKIDGST (78 aa). Residue serine 3530 is modified to O-(pantetheine 4'-phosphoryl)serine. Residues 3612–3833 form a thiolester reductase (R) domain region; that stretch reads LTGATGFLGV…DFVPVDVVAA (222 aa).

In the C-terminal section; belongs to the NRP synthetase family.

Its pathway is mycotoxin biosynthesis. Fusarin C synthetase; part of the gene cluster that mediates the biosynthesis of the mycotoxin fusarin C. Within the cluster, FUS1, FUS2, FUS8 and FUS9 are sufficient for fusarin production. The roles of the other FUS members are yet undetermined. The fusarin C synthetase FUS1 is responsible for the condensation of one acetyl-coenzyme A (CoA) unit with six malonyl-CoA units and the amide linkage of the arising heptaketide and homoserine, subsequently releasing the first intermediate, prefusarin, as an alcohol with an open ring structure. The cytochrome P450 monooxygenase FUS8 participates in multiple oxidation processes at carbon C-20 and is able to use the FUS1 product as substrate, resulting in formation of 20-hydroxy-prefusarin. This reaction seems to be essential before the 2-pyrrolidone ring closure can be catalyzed by FUS2, generating 20-hydroxy-fusarin. FUS8 is able to further oxidizes carbon C-20 after ring closure, resulting in the formation of carboxy-fusarin C. As the last step, FUS9 methylates the hydroxyl group at C-21 to generate fusarin C. Fusarin C can then rearrange to epi-fusarin C, the (z)-isomers, and fusarin A and fusarin D. This Gibberella fujikuroi (strain CBS 195.34 / IMI 58289 / NRRL A-6831) (Bakanae and foot rot disease fungus) protein is Fusarin C synthetase.